Here is a 327-residue protein sequence, read N- to C-terminus: Phenylalanine--tRNA ligase alpha subunit (327 aa).

Residue E252 participates in Mg(2+) binding.

This sequence belongs to the class-II aminoacyl-tRNA synthetase family. Phe-tRNA synthetase alpha subunit type 1 subfamily. In terms of assembly, tetramer of two alpha and two beta subunits. Mg(2+) is required as a cofactor.

It is found in the cytoplasm. The enzyme catalyses tRNA(Phe) + L-phenylalanine + ATP = L-phenylalanyl-tRNA(Phe) + AMP + diphosphate + H(+). This chain is Phenylalanine--tRNA ligase alpha subunit, found in Proteus mirabilis (strain HI4320).